A 302-amino-acid chain; its full sequence is Aquaporin NIP3-1 (302 aa).

The tract at residues 1–31 (MEPGSTPPNGSAPATPGTPAPLFSSGGPRVD) is disordered. Positions 7-21 (PPNGSAPATPGTPAP) are enriched in low complexity. A run of 2 helical transmembrane segments spans residues 76 to 96 (LGAE…APIV) and 102 to 122 (GAIS…TVIL). The short motif at 133 to 135 (NPS) is the NPA 1 element. 3 consecutive transmembrane segments (helical) span residues 149-169 (LQVP…AFAL), 193-213 (AFFT…AVAT), and 217-237 (AVGE…ILVA). An NPA 2 motif is present at residues 246–248 (NPV). The chain crosses the membrane as a helical span at residues 264-284 (WIYLLAPTLGALAGASVYKAV).

Belongs to the MIP/aquaporin (TC 1.A.8) family. NIP (TC 1.A.8.12) subfamily.

It localises to the membrane. Functionally, aquaporins facilitate the transport of water and small neutral solutes across cell membranes. This chain is Aquaporin NIP3-1 (NIP3-1), found in Zea mays (Maize).